Consider the following 814-residue polypeptide: Rho GTPase-activating protein 44 (814 aa).

The region spanning 14–249 (QTVGRAEKTE…IKAQQEAWVE (236 aa)) is the BAR domain. Positions 255-445 (KPLEEHLMIS…PIIQHADWFF (191 aa)) constitute a Rho-GAP domain. Disordered regions lie at residues 467–493 (ANYS…RPLS), 531–768 (SAGR…SMST), and 784–814 (STLR…STAL). Basic and acidic residues predominate over residues 479–489 (PADRRQPEQAR). S493 is modified (phosphoserine). Composition is skewed to low complexity over residues 531–541 (SAGRKAACAPP), 567–581 (SPAT…SGAS), 598–612 (SPGS…SIQG), 622–637 (PQPA…DQSP), 684–704 (SPYG…LSPA), and 741–752 (SVSLSASSPQST). Residues 727 to 814 (KPRQRPTLPP…SEEESESTAL (88 aa)) are interaction with BST2. Over residues 790 to 805 (PLEHARRHSVTDKRDS) the composition is skewed to basic and acidic residues. Residue S805 is modified to Phosphoserine. The PDZ-binding motif lies at 811–814 (STAL).

In terms of assembly, interacts with BST2 (via cytoplasmic domain). Interacts (probably via PDZ-binding motif) with SHANK3 (via PDZ domain); the interaction takes place in dendritic spines and promotes GRIA1 exocytosis. In terms of tissue distribution, expressed in brain, detected at high levels in hippocampal CA1 (at protein level).

Its subcellular location is the cell projection. It localises to the dendritic spine. It is found in the recycling endosome. The protein localises to the presynapse. The protein resides in the dendrite. GTPase-activating protein (GAP) that stimulates the GTPase activity of Rho-type GTPases. Thereby, controls Rho-type GTPases cycling between their active GTP-bound and inactive GDP-bound states. Acts as a GAP at least for CDC42 and RAC1. In neurons, is involved in dendritic spine formation and synaptic plasticity in a specific RAC1-GAP activity. Limits the initiation of exploratory dendritic filopodia. Recruited to actin-patches that seed filopodia, binds specifically to plasma membrane sections that are deformed inward by acto-myosin mediated contractile forces. Acts through GAP activity on RAC1 to reduce actin polymerization necessary for filopodia formation. In association with SHANK3, promotes GRIA1 exocytosis from recycling endosomes and spine morphological changes associated to long-term potentiation. This chain is Rho GTPase-activating protein 44, found in Rattus norvegicus (Rat).